Here is a 285-residue protein sequence, read N- to C-terminus: UPF0354 protein SH1179 (285 aa).

It belongs to the UPF0354 family.

The chain is UPF0354 protein SH1179 from Staphylococcus haemolyticus (strain JCSC1435).